Here is a 111-residue protein sequence, read N- to C-terminus: UPF0342 protein gbs1446 (111 aa).

It belongs to the UPF0342 family.

The chain is UPF0342 protein gbs1446 from Streptococcus agalactiae serotype III (strain NEM316).